Reading from the N-terminus, the 432-residue chain is Adenylosuccinate synthetase (432 aa).

GTP-binding positions include 13–19 and 41–43; these read GDEGKGK and GHT. D14 functions as the Proton acceptor in the catalytic mechanism. 2 residues coordinate Mg(2+): D14 and G41. Residues 14–17, 39–42, T130, R144, Q225, T240, and R304 contribute to the IMP site; these read DEGK and NAGH. The active-site Proton donor is the H42. 300 to 306 lines the substrate pocket; that stretch reads ATTGRRR. GTP contacts are provided by residues R306, 332–334, and 415–417; these read KLD and STG.

Belongs to the adenylosuccinate synthetase family. In terms of assembly, homodimer. Mg(2+) serves as cofactor.

It is found in the cytoplasm. The catalysed reaction is IMP + L-aspartate + GTP = N(6)-(1,2-dicarboxyethyl)-AMP + GDP + phosphate + 2 H(+). It functions in the pathway purine metabolism; AMP biosynthesis via de novo pathway; AMP from IMP: step 1/2. Functionally, plays an important role in the de novo pathway of purine nucleotide biosynthesis. Catalyzes the first committed step in the biosynthesis of AMP from IMP. This is Adenylosuccinate synthetase from Sodalis glossinidius (strain morsitans).